Consider the following 243-residue polypeptide: 3-deoxy-manno-octulosonate cytidylyltransferase (243 aa).

Belongs to the KdsB family.

The protein localises to the cytoplasm. The catalysed reaction is 3-deoxy-alpha-D-manno-oct-2-ulosonate + CTP = CMP-3-deoxy-beta-D-manno-octulosonate + diphosphate. The protein operates within nucleotide-sugar biosynthesis; CMP-3-deoxy-D-manno-octulosonate biosynthesis; CMP-3-deoxy-D-manno-octulosonate from 3-deoxy-D-manno-octulosonate and CTP: step 1/1. It functions in the pathway bacterial outer membrane biogenesis; lipopolysaccharide biosynthesis. Its function is as follows. Activates KDO (a required 8-carbon sugar) for incorporation into bacterial lipopolysaccharide in Gram-negative bacteria. The chain is 3-deoxy-manno-octulosonate cytidylyltransferase from Bartonella henselae (strain ATCC 49882 / DSM 28221 / CCUG 30454 / Houston 1) (Rochalimaea henselae).